The sequence spans 162 residues: Cyclic pyranopterin monophosphate synthase (162 aa).

Residues 75–77 (LCH) and 113–114 (ME) each bind substrate. D128 is a catalytic residue.

Belongs to the MoaC family. In terms of assembly, homohexamer; trimer of dimers.

The catalysed reaction is (8S)-3',8-cyclo-7,8-dihydroguanosine 5'-triphosphate = cyclic pyranopterin phosphate + diphosphate. It functions in the pathway cofactor biosynthesis; molybdopterin biosynthesis. Catalyzes the conversion of (8S)-3',8-cyclo-7,8-dihydroguanosine 5'-triphosphate to cyclic pyranopterin monophosphate (cPMP). The chain is Cyclic pyranopterin monophosphate synthase from Burkholderia orbicola (strain MC0-3).